Reading from the N-terminus, the 81-residue chain is uncharacterized protein (81 aa).

Residue K5 forms a Glycyl lysine isopeptide (Lys-Gly) (interchain with G-Cter in host protein DncV) linkage.

In terms of processing, cross-linked via an isopeptide bond to E.coli host protein DncV during infection.

This is an uncharacterized protein from Enterobacteria phage T4 (Bacteriophage T4).